The chain runs to 360 residues: Phospho-N-acetylmuramoyl-pentapeptide-transferase (360 aa).

The next 10 membrane-spanning stretches (helical) occupy residues 24 to 44 (RAVMAALTALAFSLMFGPWTI), 69 to 89 (GTPTMGGSLILTAITVSTLLW), 92 to 112 (WANPYIWILLGVLLATGALGF), 133 to 153 (MVWQSSVAVIAGLALFYLAAN), 158 to 178 (ILIVPFFKQIALPLGVVGFLV), 199 to 219 (GLAAFPVVLVAAGLAIFAYVS), 239 to 259 (VAIFCTAMCGACLGFLWFNAY), 263 to 283 (VFMGDVGALALGAALGTVAVI), 288 to 308 (FVLVIMGGLFVVEAVSVMLQV), and 337 to 357 (QVVVRFWIITIVLVLIGLSTL).

The protein belongs to the glycosyltransferase 4 family. MraY subfamily. Mg(2+) serves as cofactor.

It is found in the cell inner membrane. It carries out the reaction UDP-N-acetyl-alpha-D-muramoyl-L-alanyl-gamma-D-glutamyl-meso-2,6-diaminopimeloyl-D-alanyl-D-alanine + di-trans,octa-cis-undecaprenyl phosphate = di-trans,octa-cis-undecaprenyl diphospho-N-acetyl-alpha-D-muramoyl-L-alanyl-D-glutamyl-meso-2,6-diaminopimeloyl-D-alanyl-D-alanine + UMP. It participates in cell wall biogenesis; peptidoglycan biosynthesis. Its function is as follows. Catalyzes the initial step of the lipid cycle reactions in the biosynthesis of the cell wall peptidoglycan: transfers peptidoglycan precursor phospho-MurNAc-pentapeptide from UDP-MurNAc-pentapeptide onto the lipid carrier undecaprenyl phosphate, yielding undecaprenyl-pyrophosphoryl-MurNAc-pentapeptide, known as lipid I. The polypeptide is Phospho-N-acetylmuramoyl-pentapeptide-transferase (Neisseria gonorrhoeae (strain ATCC 700825 / FA 1090)).